Here is a 174-residue protein sequence, read N- to C-terminus: B3 domain-containing protein At3g06220 (174 aa).

A DNA-binding region (TF-B3) is located at residues 8–101 (PRFYTVFLSC…SYEVSIYGRG (94 aa)). Residues 114-174 (EISDESESDN…ISDASDSDYY (61 aa)) form a disordered region. Acidic residues-rich tracts occupy residues 139-150 (ENSDDTEGDNDS) and 164-174 (EISDASDSDYY).

Its subcellular location is the nucleus. In Arabidopsis thaliana (Mouse-ear cress), this protein is B3 domain-containing protein At3g06220.